We begin with the raw amino-acid sequence, 383 residues long: Acetylornithine deacetylase (383 aa).

H80 contacts Zn(2+). Residue D82 is part of the active site. D112 is a Zn(2+) binding site. E144 is a catalytic residue. Residues E145, E169, and H355 each coordinate Zn(2+).

This sequence belongs to the peptidase M20A family. ArgE subfamily. As to quaternary structure, homodimer. It depends on Zn(2+) as a cofactor. Co(2+) serves as cofactor. The cofactor is glutathione.

It localises to the cytoplasm. It carries out the reaction N(2)-acetyl-L-ornithine + H2O = L-ornithine + acetate. It participates in amino-acid biosynthesis; L-arginine biosynthesis; L-ornithine from N(2)-acetyl-L-ornithine (linear): step 1/1. Functionally, catalyzes the hydrolysis of the amide bond of N(2)-acetylated L-amino acids. Cleaves the acetyl group from N-acetyl-L-ornithine to form L-ornithine, an intermediate in L-arginine biosynthesis pathway, and a branchpoint in the synthesis of polyamines. The polypeptide is Acetylornithine deacetylase (Escherichia coli (strain SMS-3-5 / SECEC)).